Consider the following 327-residue polypeptide: Gonadotropin-releasing hormone receptor (327 aa).

Residues 1 to 38 lie on the Extracellular side of the membrane; that stretch reads MANNASLEQDQNHCSAINNSIPLTQGKLPTLTLSGKIR. N-linked (GlcNAc...) asparagine glycans are attached at residues asparagine 4 and asparagine 18. Residues 39–58 form a helical membrane-spanning segment; sequence VTVTFFLFLLSTAFNASFLV. Residues 59–77 are Cytoplasmic-facing; the sequence is KLQRWTQKRKKGKKLSRMK. A helical transmembrane segment spans residues 78–97; the sequence is VLLKHLTLANLLETLIVMPL. The Extracellular segment spans residues 98-115; the sequence is DGMWNITVQWYAGEFLCK. Asparagine 102 is a glycosylation site (N-linked (GlcNAc...) asparagine). A disulfide bridge connects residues cysteine 114 and cysteine 195. The chain crosses the membrane as a helical span at residues 116 to 137; the sequence is VLSYLKLFSMYAPAFMMVVISL. Over 138 to 164 the chain is Cytoplasmic; the sequence is DRSLAVTQPLAVQSKSKLERSMTSLAW. Residues 165–184 form a helical membrane-spanning segment; sequence ILSIVFAGPQLYIFRMIYLA. Residues 185-211 lie on the Extracellular side of the membrane; the sequence is DGSGPAVFSQCVTHCSFPQWWHEAFYN. The helical transmembrane segment at 212–231 threads the bilayer; sequence FFTFSCLFIIPLLIMLICNA. Over 232 to 280 the chain is Cytoplasmic; that stretch reads KIIFALTRVLHQDPRKLQLNQSKNNIPRARLRTLKMTVAFGTSFVICWT. Residues 281–299 traverse the membrane as a helical segment; the sequence is PYYVLGIWYWFDPEMLNRV. Over 300 to 305 the chain is Extracellular; it reads SEPVNH. The chain crosses the membrane as a helical span at residues 306-325; that stretch reads FFFLFAFLNPCFDPLIYGYF. Residues 326–327 lie on the Cytoplasmic side of the membrane; that stretch reads SL.

Belongs to the G-protein coupled receptor 1 family.

It localises to the cell membrane. In terms of biological role, receptor for gonadotropin releasing hormone (GnRH) that mediates the action of GnRH to stimulate the secretion of the gonadotropic hormones luteinizing hormone (LH) and follicle-stimulating hormone (FSH). This receptor mediates its action by association with G-proteins that activate a phosphatidylinositol-calcium second messenger system. The protein is Gonadotropin-releasing hormone receptor (Gnrhr) of Rattus norvegicus (Rat).